Consider the following 140-residue polypeptide: PDZ domain-containing protein 11 (140 aa).

Residues Ile-47 to Tyr-129 form the PDZ domain.

Interacts with ATP2B1, ATP2B2, ATP2B3, ATP2B4 and ATP7A. Interacts with PLEKHA7 (via WW domains) at zonula adherens; this interaction is essential for the interaction between PLEKHA7 and the ADAM10-binding protein TSPAN33. Interacts with SLC5A6.

The protein localises to the cytoplasm. It is found in the cell junction. Its subcellular location is the adherens junction. The protein resides in the cell membrane. Mediates docking of ADAM10 to zonula adherens by interacting with PLEKHA7 which is required for PLEKHA7 to interact with the ADAM10-binding protein TSPAN33. This chain is PDZ domain-containing protein 11 (PDZD11), found in Bos taurus (Bovine).